We begin with the raw amino-acid sequence, 475 residues long: Probable UDP-N-acetylglucosamine pyrophosphorylase (475 aa).

A Substrate binding motif is present at residues 103-106 (LAGG). Residues 103–106 (LAGG), lysine 117, glutamine 194, and glycine 220 contribute to the UTP site. Asparagine 221 lines the substrate pocket. A UTP-binding site is contributed by aspartate 251. A Substrate binding motif is present at residues 301–302 (EY). Lysine 378 contributes to the UTP binding site. A Phosphoserine modification is found at serine 405. Substrate is bound at residue lysine 410.

The protein belongs to the UDPGP type 1 family.

The protein resides in the cytoplasm. It is found in the nucleus. The enzyme catalyses N-acetyl-alpha-D-glucosamine 1-phosphate + UTP + H(+) = UDP-N-acetyl-alpha-D-glucosamine + diphosphate. It participates in nucleotide-sugar biosynthesis; UDP-N-acetyl-alpha-D-glucosamine biosynthesis; UDP-N-acetyl-alpha-D-glucosamine from N-acetyl-alpha-D-glucosamine 1-phosphate: step 1/1. The sequence is that of Probable UDP-N-acetylglucosamine pyrophosphorylase (uap1) from Schizosaccharomyces pombe (strain 972 / ATCC 24843) (Fission yeast).